Here is a 120-residue protein sequence, read N- to C-terminus: Seripauperin-8 (120 aa).

The signal sequence occupies residues 1 to 20 (MVKLTSIAAGVAAIAATASA).

This sequence belongs to the SRP1/TIP1 family. Seripauperin subfamily.

This is Seripauperin-8 (PAU8) from Saccharomyces cerevisiae (strain ATCC 204508 / S288c) (Baker's yeast).